The chain runs to 382 residues: MATKRDYYEILGLPKDASVEDIKKTYRKLALQYHPDRNKDPGAEDKFKEISEAYAVLSDTEKRAQYDRFGHAGIDNQYSAEDIFRGADFGGFGDIFEMFFGGGRRGGPMGPRRGSDLQYDLYITFEEAAFGVRKDIDIPRTERCSTCSGTGAKPGTSPKRCPTCGGTGQVRTTRSTLGMQFISTTTCSTCHGRGQIIESPCPVCGGAGRVRNKRTITVNVPAGADSGMSLRLSGEGDSGEPGAPSGDLYIIIHVMEHRHFKRVDYDVISELSITFTQAALGADVMVDTLYGKVKMNIPAGTQTHSVFRLRDKGIQRLHGHGKGDQLVRVIIKTPTKLNQEQKELLRQFENLSKGKKPQEEEKSKAEKHKKGIFEKVKDAFES.

A J domain is found at 6 to 70 (DYYEILGLPK…EKRAQYDRFG (65 aa)). The segment at 131–213 (GVRKDIDIPR…CGGAGRVRNK (83 aa)) adopts a CR-type zinc-finger fold. 8 residues coordinate Zn(2+): Cys144, Cys147, Cys161, Cys164, Cys187, Cys190, Cys201, and Cys204. 4 CXXCXGXG motif repeats span residues 144 to 151 (CSTCSGTG), 161 to 168 (CPTCGGTG), 187 to 194 (CSTCHGRG), and 201 to 208 (CPVCGGAG). The segment at 146-168 (TCSGTGAKPGTSPKRCPTCGGTG) is disordered. The interval 348 to 382 (FENLSKGKKPQEEEKSKAEKHKKGIFEKVKDAFES) is disordered. Positions 371-382 (GIFEKVKDAFES) are enriched in basic and acidic residues.

It belongs to the DnaJ family. As to quaternary structure, homodimer. Requires Zn(2+) as cofactor.

The protein localises to the cytoplasm. Participates actively in the response to hyperosmotic and heat shock by preventing the aggregation of stress-denatured proteins and by disaggregating proteins, also in an autonomous, DnaK-independent fashion. Unfolded proteins bind initially to DnaJ; upon interaction with the DnaJ-bound protein, DnaK hydrolyzes its bound ATP, resulting in the formation of a stable complex. GrpE releases ADP from DnaK; ATP binding to DnaK triggers the release of the substrate protein, thus completing the reaction cycle. Several rounds of ATP-dependent interactions between DnaJ, DnaK and GrpE are required for fully efficient folding. Also involved, together with DnaK and GrpE, in the DNA replication of plasmids through activation of initiation proteins. The protein is Chaperone protein DnaJ of Methanosarcina acetivorans (strain ATCC 35395 / DSM 2834 / JCM 12185 / C2A).